Consider the following 329-residue polypeptide: Transposable element Tc3 transposase (329 aa).

The DNA-binding element occupies 2–135 (PRGSALSDTE…LEFAKNNMGT (134 aa)).

This sequence belongs to the transposase 5 family. As to quaternary structure, homodimer or homotetramer.

Its subcellular location is the nucleus. Binds specifically to the terminal nucleotides of the TC3 inverted repeat. Its expression results in frequent excision and transposition of endogenous TC3 elements. TC3 transposase acts by making double strand breaks at the ends of TC3 element. The excised element would then be inserted into a target sequence. The protein is Transposable element Tc3 transposase (tc3a) of Caenorhabditis elegans.